A 382-amino-acid polypeptide reads, in one-letter code: Neuropeptide Y receptor type 2 (382 aa).

The segment at methionine 1–proline 39 is disordered. At methionine 1–lysine 46 the chain is on the extracellular side. Asparagine 11 carries an N-linked (GlcNAc...) asparagine glycan. The chain crosses the membrane as a helical span at residues leucine 47–valine 67. Over glycine 68–asparagine 87 the chain is Cytoplasmic. The helical transmembrane segment at phenylalanine 88 to threonine 108 threads the bilayer. The Extracellular portion of the chain corresponds to leucine 109–histidine 125. Cysteine 124 and cysteine 204 are oxidised to a cystine. The helical transmembrane segment at leucine 126–alanine 146 threads the bilayer. The Cytoplasmic segment spans residues leucine 147 to serine 166. A helical transmembrane segment spans residues phenylalanine 167 to phenylalanine 187. Over arginine 188–glycine 217 the chain is Extracellular. The helical transmembrane segment at threonine 218–phenylalanine 238 threads the bilayer. At serine 239 to lysine 269 the chain is on the cytoplasmic side. Residues methionine 270–leucine 290 form a helical membrane-spanning segment. The Extracellular portion of the chain corresponds to alanine 291–lysine 305. Residues leucine 306–tyrosine 326 form a helical membrane-spanning segment. Topologically, residues glycine 327–valine 382 are cytoplasmic. Cysteine 343 is lipidated: S-palmitoyl cysteine. Residues asparagine 363 to valine 382 form a disordered region.

This sequence belongs to the G-protein coupled receptor 1 family.

It is found in the cell membrane. Receptor for neuropeptide Y and peptide YY. This chain is Neuropeptide Y receptor type 2 (NPY2R), found in Sus scrofa (Pig).